We begin with the raw amino-acid sequence, 310 residues long: tRNA-cytidine(32) 2-sulfurtransferase (310 aa).

Residues 45–50 carry the PP-loop motif motif; the sequence is SGGKDS. [4Fe-4S] cluster-binding residues include cysteine 120, cysteine 123, and cysteine 211.

Belongs to the TtcA family. Homodimer. Mg(2+) is required as a cofactor. [4Fe-4S] cluster serves as cofactor.

The protein localises to the cytoplasm. The catalysed reaction is cytidine(32) in tRNA + S-sulfanyl-L-cysteinyl-[cysteine desulfurase] + AH2 + ATP = 2-thiocytidine(32) in tRNA + L-cysteinyl-[cysteine desulfurase] + A + AMP + diphosphate + H(+). The protein operates within tRNA modification. Functionally, catalyzes the ATP-dependent 2-thiolation of cytidine in position 32 of tRNA, to form 2-thiocytidine (s(2)C32). The sulfur atoms are provided by the cysteine/cysteine desulfurase (IscS) system. This Shewanella baltica (strain OS155 / ATCC BAA-1091) protein is tRNA-cytidine(32) 2-sulfurtransferase.